The primary structure comprises 325 residues: D-xylose 1-dehydrogenase (NADP(+)) 2 (325 aa).

The N-terminal stretch at 1–22 is a signal peptide; the sequence is MMFGILGTAGIGVKSVIPAVQA.

It belongs to the Gfo/Idh/MocA family. In terms of assembly, homotetramer.

The protein localises to the secreted. It carries out the reaction D-xylose + NADP(+) = D-xylono-1,5-lactone + NADPH + H(+). In terms of biological role, NADP-dependent D-xylose dehydrogenase involved in the degradation of D-xylose, a major component of hemicelluloses such as xylan. Even if it shows D-xylose dehydrogenase activity, it is not essential for D-xylose degradation. This Haloferax volcanii (strain ATCC 29605 / DSM 3757 / JCM 8879 / NBRC 14742 / NCIMB 2012 / VKM B-1768 / DS2) (Halobacterium volcanii) protein is D-xylose 1-dehydrogenase (NADP(+)) 2.